Here is a 172-residue protein sequence, read N- to C-terminus: Translationally-controlled tumor protein homolog (172 aa).

A TCTP domain is found at 1–172 (MKIYKDIITG…FKHGLDEEKC (172 aa)).

The protein belongs to the TCTP family.

It localises to the cytoplasm. Functionally, involved in calcium binding and microtubule stabilization. This is Translationally-controlled tumor protein homolog from Drosophila yakuba (Fruit fly).